The sequence spans 210 residues: Ribulose-phosphate 3-epimerase (210 aa).

Residue Ser-9 participates in substrate binding. 3 residues coordinate a divalent metal cation: His-34, Asp-36, and His-68. The active-site Proton acceptor is Asp-36. Residues His-68, 144 to 147 (GFGG), 177 to 179 (DGG), and 199 to 200 (GS) contribute to the substrate site. Asp-177 provides a ligand contact to a divalent metal cation. Asp-177 acts as the Proton donor in catalysis.

It belongs to the ribulose-phosphate 3-epimerase family. Requires a divalent metal cation as cofactor.

It carries out the reaction D-ribulose 5-phosphate = D-xylulose 5-phosphate. It functions in the pathway carbohydrate degradation. Functionally, catalyzes the reversible epimerization of D-ribulose 5-phosphate to D-xylulose 5-phosphate. This Serratia marcescens protein is Ribulose-phosphate 3-epimerase.